The sequence spans 442 residues: Cell cycle checkpoint control protein RAD9B (442 aa).

Disordered stretches follow at residues 370–392 (EVPE…TEDV) and 422–442 (QSLA…FSTF). The residue at position 387 (Ser-387) is a Phosphoserine.

This sequence belongs to the rad9 family. Interacts with HUS1, HUS1B, RAD1, RAD9A and RAD17.

The protein is Cell cycle checkpoint control protein RAD9B (RAD9B) of Bos taurus (Bovine).